Reading from the N-terminus, the 236-residue chain is Glycoprotein U23 (236 aa).

Positions 1–17 (MLFLSFLLVCLCEEVRM) are cleaved as a signal peptide. Residues asparagine 67, asparagine 80, and asparagine 103 are each glycosylated (N-linked (GlcNAc...) asparagine; by host). The helical transmembrane segment at 184-204 (LVIWIGGISFIGAFVILIVIL) threads the bilayer.

It localises to the membrane. The sequence is that of Glycoprotein U23 (U23) from Human herpesvirus 6A (strain Uganda-1102) (HHV-6 variant A).